The sequence spans 3914 residues: MSDNEPIAIIGSACRFPGDSSSPSKLWDLLKSPRDLLTKVPPNRYNADAFYHADSKHHGTTNVRHSYFLNEDPARFDNNFFNIQPGEAEAIDPQQRLLMEVVYQGLCASGQTIEGLRGSPTAVYVGVMCDDWSGIITRDLEVFPQYGATGMARSIMSNRISYFFDWHGPSMTIDTACSSSLVAVHQAIQTLRSGESEVAIAAGANLILTPGRSKMWDQDVNGYARGEGIAAVVLKPLSAAIRDNDHIDCIIRATGVNQDGRTPGLTMPSATAQADLIRSTYARAGLDINKPEDRPQFFHAHGTGTPAGDPREAEAIYRAFYSDVKDDKLYVGSIKTVLGHTEGTAGLASLIGTALAIQNKTIPPNMHFDVLNPKIKPFYDNLEVPTKAIAWPETHKGQPRRASINSFGFGGTNAHAIIEAYEPATTDSAPGPLFSPLTFSASSEPSLRSLLSSYSDHLKSNPDLSLKDLAYTLQTRRSTLAYRVAITASDVEDAYTQLDTIGNGEQSSTIGVRQVTKASPKIMGVLTGQGAQWPRMGARLVEESAFASQRLFELDEALSSLPKDDRPSWTLREMILADSKSSRIAEAAISQPLCTAVQVVLVDLLRQAGVELSSVVGHSSGEIGAAYAAGLLTARDAIRVAYYRGLYAKLAQSPNGRKGAMMAVGTTFDDASEFCELDAFQGRIQVAARNSSSSITLSGDEDAIVEAIETFKDEGKFARQLKVDTAYHSAHVLPCAKPYLDAMERCQIESANPTSTKWYSSVHDGQAMTAELLTPQYWVDNMTSAVLFSPAVEHAWREGGPYDVIIEVGPHPVLKTPCLDTLEDMTGDRPPYSGVLGREKDDIQQFASGLGFIWTQLGAGSATFERFEKVASDSKSIPSFIHDLPNYPFDHARQFMSMSRVSGWYNSMQEAPHPILGRRCHDRETSQTIQWRNVLNPKEIPWLHGHQIQGQIIFPATGYISMAIEAVNIIAGSDLGLVTIEDLRIGRALAFSDDDASVESMFDLRIISRSEKEIEAEFSCYSGLPQNHTTSMVLNATAHVKASLSVPTAQKLPNLKIDDFNLRKVEVDRFYDFLGRLGYNYSWPFHGTTSIRRKANYATGTLEDQSGSEWEDQLLVHPGMLDTSLQTTFAAFCCPGDERMWALHLPTSFRSIVVNPYFTSAGIGKQKSFQYQSVAIQERKASKVIVELNLLSEETGDTFLQIEGMELVPFSPATPENDAVLFSRFDYRLASPDGELTAAEYSFRDEDYKMALDSERIAFYYLRRLVETITPEDKANTLPHYRHLVEWAAHVVPQVIDGRNPHIPSSAQKDTHEDIQNILKKHYERVDVRLLESVGENLPQVIRENGNILEHMTKDGMLDDVYEEGFGLDLVNKYIAHMTAQIAHRYPRMNILEIGAGTGGSTREILPRLGSAFSTYTYTDVSGGFFDTAQDRFKDYAERMIFKTFDMNISPGSQGFTEGTYDLVIASNVLHATLELEDMMKHVRSFLKPGGFLIILETVNNDCLRVGLPMGSLPGWWLGAEHGRRWGPTLTLPQWDSLLWKCGFGGIDTTTPPVHKILPGHVFCAQALDDRVEILRSPLSHLSDLPETKSTELVIVGGETLKVHRMCEQISRRLKPKYASIARFNSIEELNTSGLADSCAVVSLTELDEPLFANMTSDKLDALKTLWKQGGSILWVTSGARDENPYSYMTTGVGRCMRFEYPNITLQALDIKAMTDRTPGLVAEHLLRLELLDKWSKELRPEELLWSLEPEIYVDDDTTIVPRLYPYESGNARYNAERRNIVEDADLQTDRVIFVENEGKWEVQHASPLHIPQELPFASKMKTIRITHFSPATINFAPGVSLMVCAGIDAASGERLLAVTHVAESPISVPADWCIPLGELDGVDTLANVSAFLIASSILKHVATEETLVVHGAPSRLASALEGLAKESSITVFLTTSERANKNGWQYIDSHLPERVIKASIPRSATKFINLSQDANMGETGRAISACLPRYCEVINTERLFIWGKLIRESVSKEDISIVFNRAFYETKSLSSTATDARLISLQDVSGVSAAEVRFAVVDCIDSSVKASIRPIDDGRIFQADKTFLLIGLSGELGQSLGKWMVEQGARNIVLTSRRPNVSQHFLDEMATMGATVKALPMDVTNRDSLHACVDTIQKTLPPIAGVVNGAMVLRDALFENMPYEDFMKVLSPKVLGSQLLDELFYDTPLDFFIFFSSTTAVMGNSGQSNYIAGNMFMNALAAQRKKRGVAASSIDISSIIGLGYVERAEDLSEDTFIKMGYKPMSEQDLQKLFAEAIVLGRPECDEVCELVTGVTPIYTDAQASDQYLKDVKFGHFLMERLDTQAYTGKTSTVPVRVQLADVKTKADAVAIIKGMFSLLTPVIIADLERFLHFEQGVDSLMAVEVRSWFIKELDIDIPVLKILGGMSVPDLIEESLNLISDSILDVSSLEAGSTPTTQPPKPTLQIARVTPPESSHGTSDDSKQQTGSDSSRSPIDTPLTSMEIQEPAKAEDSTDNSTPLKTFPNELSSIMSYGQAGFWFLNDYLVNKRAFNMAVMLKLTGQVRVQALEKAVNLVAERHEVLRTRFFWGDDGDERTPLQGINPADLKLTTKKVADESEAGMELKKLHDEEWDLSRGEGVKITLLSLSDNVHFLLLGMHHIYIDGYSFSVFFKDLEVAYTKNTLPSLPVESQYRSFALQQRQMYANGNLTKSIEYYRRSFPKEFSPIQLFPFALTPARQFANDYSQHEAKMSIDPELAPKVRQLARVNRSTSFHVYLAALELLLFTLLPNIEEVFIGIADANRGDKKFMGSLGFFLNLLPLRFRRKRRGTQLSSIIQTARDTAYGALQHSQLPFDVLLRELNVPRSDKYTPIFQVFMDYRQVVQERSSWGGCKLHGEKWHNAGTGYDIALEVNENITTDTLLGLRLQKQLYSEEHTALLLRSYLSVLEYMVQGTNKAADTVPPWSKDDIQVALDAGKAPEFQPKWQSTISHHIDQTIQANSTKVALKDGNGTVLTYEQMGNRVNSITQALIDAGTTQGTVVGVFQEPSSDWICSLLAIFKAGAVYVPLDLRNSIPRLASIVKASRPSLIITDHTTDDKVELIGAKYITQLQLSKVVDQEFKEPNRAKVGSLAVILFTSGSTGEPKGLMMTHTNLMSYAEVSSKTFSKPDESLMVLQQSPFSFDFSLDQTVAALANGGCLCIVPASKRGDPDEISKIMVKEGVTYTTATPSEYDLWLRYSTSTLRQCTSWKYAFSGGEAMSHKLAREFGTLSLKNLHVFNGYGPAETTILSHRIDLQYTDPDLPDPLPAGCPMPGFSVCIVDEKMRPVPLGVQGEIVLGGPCIVSGYLSMPDATKDKFLPDTFFGTSGKVYRSGDRGRLCHDGLLFCDGRLEDSNMIKLRGFRVELDEVEKTIISHSAGTLSHAVVTLRGTEEGRYLAAHVVFAPEFPEQNRESIMKTLRQTLPLPPYMRPSVFQILADIPRTAHLKVDRKAIQEMPVQISASHDSGTLTVAEQRLSELWRRVLPLDPGSLSPESDFFLIGGNSILLVKLQALLRQTFKTAPKLVALMGASTLGTMAVVLESCGSVGVIDWDQETALPNGLQGAVALRPVNKITDITVLLTGSAGYLGRHLVPALVEDPRVTRVHCLVRSVNNEKLSTSSSSKVRVIESDLSKPGLGLSASTYSRLAEETDVIIHSAANRSFWDRYEVLKPDNLDSVKELVRFAASSGRSIPLHFLSSGAVKIYDGDVVTPPTDGSDGYVATKWASETFLRNAAGSIGLPVYAHRPTVSSKAQTKTDQASIVDELFSIVKFLGVRPSFEGVTGSVDVLPTGDIVKAIQDSVLSSSAGGEGYNVLQHEAHQRAFVEDFAGVVRADDSLNKLPSISILDWFGKAKKAGFSYFLASQNLVMGEGEGHLVSRR.

One can recognise a Ketosynthase family 3 (KS3) domain in the interval 4-420 (NEPIAIIGSA…GTNAHAIIEA (417 aa)). Catalysis depends on for beta-ketoacyl synthase activity residues cysteine 177, histidine 301, and histidine 340. Positions 525–847 (VLTGQGAQWP…REKDDIQQFA (323 aa)) are malonyl-CoA:ACP transacylase (MAT) domain. Positions 913–1047 (HPILGRRCHD…AHVKASLSVP (135 aa)) are N-terminal hotdog fold. Residues 913-1214 (HPILGRRCHD…MELVPFSPAT (302 aa)) are dehydratase (DH) domain. The PKS/mFAS DH domain maps to 913–1216 (HPILGRRCHD…LVPFSPATPE (304 aa)). Histidine 946 serves as the catalytic Proton acceptor; for dehydratase activity. Residues 1062–1216 (LRKVEVDRFY…LVPFSPATPE (155 aa)) are C-terminal hotdog fold. Aspartate 1122 acts as the Proton donor; for dehydratase activity in catalysis. The tract at residues 1364 to 1593 (EGFGLDLVNK…DLPETKSTEL (230 aa)) is methyltransferase (MT) domain. The ketoreductase (KR) domain stretch occupies residues 2083-2255 (TFLLIGLSGE…VAASSIDISS (173 aa)). Positions 2356-2436 (LADVKTKADA…DLIEESLNLI (81 aa)) constitute a Carrier 1 domain. Serine 2396 carries the O-(pantetheine 4'-phosphoryl)serine modification. The disordered stretch occupies residues 2447 to 2518 (EAGSTPTTQP…DSTDNSTPLK (72 aa)). Over residues 2481–2500 (QQTGSDSSRSPIDTPLTSME) the composition is skewed to polar residues. Positions 2529–2956 (SYGQAGFWFL…VQGTNKAADT (428 aa)) are condensation (C) domain. Residues 2991–3388 (QTIQANSTKV…LLFCDGRLED (398 aa)) form an adenylation (A) (KR) domain region. Positions 3502 to 3579 (GTLTVAEQRL…TMAVVLESCG (78 aa)) constitute a Carrier 2 domain. Residue serine 3539 is modified to O-(pantetheine 4'-phosphoryl)serine. Residues 3615–3831 (LTGSAGYLGR…VLPTGDIVKA (217 aa)) are reductase (RED) domain.

It in the C-terminal section; belongs to the NRP synthetase family.

It carries out the reaction L-serine + 7 malonyl-CoA + acetyl-CoA + 2 S-adenosyl-L-methionine + ATP + 8 NADPH + 11 H(+) = (5S)-3-[(2E,6R,8E,10E,12E)-2,6-dimethyltetradeca-2,8,10,12-tetraenoyl]-5-(hydroxymethyl)pyrrolidine-2,4-dione + AMP + 2 S-adenosyl-L-homocysteine + 7 CO2 + diphosphate + 8 NADP(+) + 8 CoA + 6 H2O. Its pathway is mycotoxin biosynthesis. Hybrid PKS-NRPS synthetase; part of the gene cluster that mediates the biosynthesis of trichosetin, a trans-fused decalin-containing tetramic acid with antimicrobial activity. The PKS module of PKS-NRPS1 together with the enoylreductase (ER) catalyze the formation of the polyketide unit which is then conjugated to L-serine by the condensation domain of the PKS-NRPS1 NRPS module. Activity of the Dieckmann cyclase domain (RED) results in release of the Dieckmann product intermediate. Diels-Alderase (DA) is involved in endo-selective Diels-Alder cycloaddition to form the decalin ring, leading to the production of N-desmethylequisetin also called trichosetin. The cluster does not contain the equisetin N-methyltransferase and consequently, trichosetin is isolated as final product. The chain is Trichosetin synthetase PKS-NRPS1 from Gibberella fujikuroi (strain CBS 195.34 / IMI 58289 / NRRL A-6831) (Bakanae and foot rot disease fungus).